The sequence spans 193 residues: uncharacterized protein (193 aa).

Residues 86 to 181 (TKQRELLEIL…QVEEVQAEVG (96 aa)) adopt a coiled-coil conformation.

This is an uncharacterized protein from Streptococcus pyogenes serotype M6 (strain ATCC BAA-946 / MGAS10394).